The following is a 119-amino-acid chain: Ribonuclease P protein component (119 aa).

The tract at residues 1-24 is disordered; it reads MRGSSRFRPHEKLRASDDYQRVKR. Over residues 8–21 the composition is skewed to basic and acidic residues; that stretch reads RPHEKLRASDDYQR.

It belongs to the RnpA family. As to quaternary structure, consists of a catalytic RNA component (M1 or rnpB) and a protein subunit.

It catalyses the reaction Endonucleolytic cleavage of RNA, removing 5'-extranucleotides from tRNA precursor.. In terms of biological role, RNaseP catalyzes the removal of the 5'-leader sequence from pre-tRNA to produce the mature 5'-terminus. It can also cleave other RNA substrates such as 4.5S RNA. The protein component plays an auxiliary but essential role in vivo by binding to the 5'-leader sequence and broadening the substrate specificity of the ribozyme. This is Ribonuclease P protein component from Syntrophobacter fumaroxidans (strain DSM 10017 / MPOB).